The sequence spans 525 residues: Vanin-like protein 2 (525 aa).

An N-terminal signal peptide occupies residues 1–27 (MAKNYWGFFLFCLALGLMLNLSQQASL). Residues asparagine 20 and asparagine 61 are each glycosylated (N-linked (GlcNAc...) asparagine). One can recognise a CN hydrolase domain in the interval 33-303 (YTAGVVEFEP…RSIYVARVPK (271 aa)). Residue glutamate 72 is the Proton acceptor of the active site. Asparagine 99, asparagine 116, and asparagine 124 each carry an N-linked (GlcNAc...) asparagine glycan. Lysine 167 acts as the Proton donor in catalysis. The N-linked (GlcNAc...) asparagine glycan is linked to asparagine 176. Cysteine 199 functions as the Nucleophile in the catalytic mechanism. Residues asparagine 333, asparagine 348, and asparagine 375 are each glycosylated (N-linked (GlcNAc...) asparagine).

It belongs to the carbon-nitrogen hydrolase superfamily. BTD/VNN family. In terms of tissue distribution, expressed in third instar larvae.

It is found in the secreted. The chain is Vanin-like protein 2 from Drosophila melanogaster (Fruit fly).